Reading from the N-terminus, the 172-residue chain is RNA silencing suppressor p19 (172 aa).

Positions 1 to 20 (MERAIQGNDAREQANSERWD) are enriched in basic and acidic residues. The segment at 1-38 (MERAIQGNDAREQANSERWDGGSGGTTSPFKLPDESPS) is disordered.

This sequence belongs to the tombusviruses protein p19 family. As to quaternary structure, homodimer.

In terms of biological role, acts as a suppressor of RNA-mediated gene silencing, also known as post-transcriptional gene silencing (PTGS), a mechanism of plant viral defense that limits the accumulation of viral RNAs. Binds to short interfering RNAs (siRNAs) with high affinity. Acts as a molecular caliper to specifically select siRNAs based on the length of the duplex region of the RNA. The polypeptide is RNA silencing suppressor p19 (Capsicum annuum (Capsicum pepper)).